The chain runs to 80 residues: Small, acid-soluble spore protein Tlp (80 aa).

The segment covering alanine 34–alanine 73 has biased composition (basic and acidic residues). The tract at residues alanine 34–serine 80 is disordered.

This sequence belongs to the Tlp family.

It localises to the spore core. The sequence is that of Small, acid-soluble spore protein Tlp from Bacillus velezensis (strain DSM 23117 / BGSC 10A6 / LMG 26770 / FZB42) (Bacillus amyloliquefaciens subsp. plantarum).